We begin with the raw amino-acid sequence, 159 residues long: Cyclic pyranopterin monophosphate synthase (159 aa).

Residues 74–76 and 112–113 each bind substrate; these read MCH and ME. Residue D127 is part of the active site.

Belongs to the MoaC family. Homohexamer; trimer of dimers.

The enzyme catalyses (8S)-3',8-cyclo-7,8-dihydroguanosine 5'-triphosphate = cyclic pyranopterin phosphate + diphosphate. It functions in the pathway cofactor biosynthesis; molybdopterin biosynthesis. Functionally, catalyzes the conversion of (8S)-3',8-cyclo-7,8-dihydroguanosine 5'-triphosphate to cyclic pyranopterin monophosphate (cPMP). The sequence is that of Cyclic pyranopterin monophosphate synthase from Helicobacter hepaticus (strain ATCC 51449 / 3B1).